Consider the following 226-residue polypeptide: Spermatogenesis-associated protein 25 (226 aa).

Residues 153–173 (ICILTLAMMIAGIPTVPVPGL) traverse the membrane as a helical segment.

Belongs to the SPATA25 family. As to expression, expressed strongly in testis, weakly in epididymis and not detected in other tissues.

Its subcellular location is the membrane. In terms of biological role, may play a role in spermatogenesis. The polypeptide is Spermatogenesis-associated protein 25 (Spata25) (Mus musculus (Mouse)).